Here is a 567-residue protein sequence, read N- to C-terminus: Dihydroxy-acid dehydratase 3 (567 aa).

Cysteine 57 serves as a coordination point for [2Fe-2S] cluster. Aspartate 89 lines the Mg(2+) pocket. Cysteine 130 is a binding site for [2Fe-2S] cluster. Mg(2+)-binding residues include aspartate 131 and lysine 132. An N6-carboxylysine modification is found at lysine 132. Cysteine 202 contributes to the [2Fe-2S] cluster binding site. Residue glutamate 454 coordinates Mg(2+). Serine 480 acts as the Proton acceptor in catalysis.

This sequence belongs to the IlvD/Edd family. Homodimer. It depends on [2Fe-2S] cluster as a cofactor. Mg(2+) is required as a cofactor.

It carries out the reaction (2R)-2,3-dihydroxy-3-methylbutanoate = 3-methyl-2-oxobutanoate + H2O. The enzyme catalyses (2R,3R)-2,3-dihydroxy-3-methylpentanoate = (S)-3-methyl-2-oxopentanoate + H2O. It participates in amino-acid biosynthesis; L-isoleucine biosynthesis; L-isoleucine from 2-oxobutanoate: step 3/4. It functions in the pathway amino-acid biosynthesis; L-valine biosynthesis; L-valine from pyruvate: step 3/4. Functionally, functions in the biosynthesis of branched-chain amino acids. Catalyzes the dehydration of (2R,3R)-2,3-dihydroxy-3-methylpentanoate (2,3-dihydroxy-3-methylvalerate) into 2-oxo-3-methylpentanoate (2-oxo-3-methylvalerate) and of (2R)-2,3-dihydroxy-3-methylbutanoate (2,3-dihydroxyisovalerate) into 2-oxo-3-methylbutanoate (2-oxoisovalerate), the penultimate precursor to L-isoleucine and L-valine, respectively. The polypeptide is Dihydroxy-acid dehydratase 3 (Aromatoleum aromaticum (strain DSM 19018 / LMG 30748 / EbN1) (Azoarcus sp. (strain EbN1))).